A 431-amino-acid chain; its full sequence is Adenylosuccinate synthetase (431 aa).

GTP contacts are provided by residues 12–18 (GDEGKGK) and 40–42 (GHT). The active-site Proton acceptor is the D13. D13 and G40 together coordinate Mg(2+). IMP is bound by residues 13–16 (DEGK), 38–41 (NAGH), T131, R145, Q225, T240, and R304. Residue H41 is the Proton donor of the active site. 300–306 (TNTGRRR) is a binding site for substrate. GTP-binding positions include R306, 332–334 (KLD), and 414–416 (STS).

The protein belongs to the adenylosuccinate synthetase family. As to quaternary structure, homodimer. Requires Mg(2+) as cofactor.

It localises to the cytoplasm. It catalyses the reaction IMP + L-aspartate + GTP = N(6)-(1,2-dicarboxyethyl)-AMP + GDP + phosphate + 2 H(+). It participates in purine metabolism; AMP biosynthesis via de novo pathway; AMP from IMP: step 1/2. Its function is as follows. Plays an important role in the de novo pathway of purine nucleotide biosynthesis. Catalyzes the first committed step in the biosynthesis of AMP from IMP. This Methylocella silvestris (strain DSM 15510 / CIP 108128 / LMG 27833 / NCIMB 13906 / BL2) protein is Adenylosuccinate synthetase.